The sequence spans 126 residues: Iron-sulfur cluster insertion protein ErpA (126 aa).

The disordered stretch occupies residues 1 to 21; it reads MNQPANQFNPSSSQPVDPTVL. Positions 54, 118, and 120 each coordinate iron-sulfur cluster.

The protein belongs to the HesB/IscA family. In terms of assembly, homodimer. Iron-sulfur cluster serves as cofactor.

Its function is as follows. Required for insertion of 4Fe-4S clusters for at least IspG. The chain is Iron-sulfur cluster insertion protein ErpA from Psychrobacter arcticus (strain DSM 17307 / VKM B-2377 / 273-4).